A 346-amino-acid chain; its full sequence is Low specificity L-threonine aldolase (346 aa).

Lysine 207 bears the N6-(pyridoxal phosphate)lysine mark.

It belongs to the threonine aldolase family. As to quaternary structure, homotetramer. Requires pyridoxal 5'-phosphate as cofactor.

It catalyses the reaction L-threonine = acetaldehyde + glycine. It carries out the reaction L-allo-threonine = acetaldehyde + glycine. Functionally, catalyzes the cleavage of L-allo-threonine and L-threonine to glycine and acetaldehyde. This Pseudomonas aeruginosa (strain ATCC 15692 / DSM 22644 / CIP 104116 / JCM 14847 / LMG 12228 / 1C / PRS 101 / PAO1) protein is Low specificity L-threonine aldolase (ltaE).